The chain runs to 227 residues: Uracil-DNA glycosylase (227 aa).

Asp-64 functions as the Proton acceptor in the catalytic mechanism.

This sequence belongs to the uracil-DNA glycosylase (UDG) superfamily. UNG family.

The protein localises to the cytoplasm. It carries out the reaction Hydrolyzes single-stranded DNA or mismatched double-stranded DNA and polynucleotides, releasing free uracil.. Its function is as follows. Excises uracil residues from the DNA which can arise as a result of misincorporation of dUMP residues by DNA polymerase or due to deamination of cytosine. The polypeptide is Uracil-DNA glycosylase (Serratia proteamaculans (strain 568)).